Consider the following 640-residue polypeptide: Translation factor GUF1, mitochondrial (640 aa).

The transit peptide at 1-26 (MRRLRSLYLQSSICFRRFNHYSAKDT) directs the protein to the mitochondrion. The region spanning 39 to 223 (ENYRNFSIVA…AIIDRIPPPT (185 aa)) is the tr-type G domain. Residues 48 to 55 (AHVDHGKS), 115 to 119 (DTPGH), and 169 to 172 (NKID) contribute to the GTP site.

This sequence belongs to the TRAFAC class translation factor GTPase superfamily. Classic translation factor GTPase family. LepA subfamily.

Its subcellular location is the mitochondrion inner membrane. The enzyme catalyses GTP + H2O = GDP + phosphate + H(+). Promotes mitochondrial protein synthesis. May act as a fidelity factor of the translation reaction, by catalyzing a one-codon backward translocation of tRNAs on improperly translocated ribosomes. Binds to mitochondrial ribosomes in a GTP-dependent manner. The sequence is that of Translation factor GUF1, mitochondrial from Lachancea thermotolerans (strain ATCC 56472 / CBS 6340 / NRRL Y-8284) (Yeast).